Here is a 367-residue protein sequence, read N- to C-terminus: snRNA-activating protein complex subunit 1 (367 aa).

Positions 1 to 168 are SNAPC3-binding; it reads MGTPPGLQTD…EEFKDPSDRV (168 aa). The tract at residues 164 to 268 is SNAPC4-binding; it reads PSDRVMKLIT…AESLAKIKSK (105 aa). 2 disordered regions span residues 228 to 254 and 278 to 367; these read KDRK…QETE and KSRR…KRKH. Basic and acidic residues predominate over residues 238 to 254; that stretch reads KINDGEEKMEGNSQETE. Phosphoserine occurs at positions 289 and 290. The segment covering 292-301 has biased composition (polar residues); sequence CDSASGQGQV.

Part of the SNAPc complex composed of 5 subunits: SNAPC1, SNAPC2, SNAPC3, SNAPC4 and SNAPC5. SNAPC1 interacts with SNAPC3, SNAPC4 and TBP.

The protein localises to the nucleus. Functionally, part of the SNAPc complex required for the transcription of both RNA polymerase II and III small-nuclear RNA genes. Binds to the proximal sequence element (PSE), a non-TATA-box basal promoter element common to these 2 types of genes. Recruits TBP and BRF2 to the U6 snRNA TATA box. In Macaca fascicularis (Crab-eating macaque), this protein is snRNA-activating protein complex subunit 1 (SNAPC1).